Consider the following 249-residue polypeptide: Triosephosphate isomerase (249 aa).

Residue 9–11 participates in substrate binding; that stretch reads NWK. Residue His94 is the Electrophile of the active site. Glu166 functions as the Proton acceptor in the catalytic mechanism. Residues Gly172 and 232–233 each bind substrate; that span reads GG.

It belongs to the triosephosphate isomerase family. In terms of assembly, homodimer.

The protein localises to the cytoplasm. It catalyses the reaction D-glyceraldehyde 3-phosphate = dihydroxyacetone phosphate. It participates in carbohydrate biosynthesis; gluconeogenesis. The protein operates within carbohydrate degradation; glycolysis; D-glyceraldehyde 3-phosphate from glycerone phosphate: step 1/1. Functionally, involved in the gluconeogenesis. Catalyzes stereospecifically the conversion of dihydroxyacetone phosphate (DHAP) to D-glyceraldehyde-3-phosphate (G3P). The protein is Triosephosphate isomerase of Xylella fastidiosa (strain M23).